Consider the following 147-residue polypeptide: MAERPEDLNLPNAVITRIIKEALPDGVNISKEARSAISRAASVFVLYATSCANNFAMKGKRKTLNASDVLSAMEEMEFQRFVTPLKEALEAYRREQKGKKEASEQKKKDKDKKTDSEEQDKSRDEDNDEDEERLEEEEQNEEEEVDN.

Ala-2 carries the post-translational modification N-acetylalanine. Position 83 is a phosphothreonine (Thr-83). Residues 85–146 (LKEALEAYRR…EEQNEEEEVD (62 aa)) are a coiled coil. Over residues 93–124 (RREQKGKKEASEQKKKDKDKKTDSEEQDKSRD) the composition is skewed to basic and acidic residues. A disordered region spans residues 93–147 (RREQKGKKEASEQKKKDKDKKTDSEEQDKSRDEDNDEDEERLEEEEQNEEEEVDN). Ser-122 carries the phosphoserine modification. Residues 125 to 147 (EDNDEDEERLEEEEQNEEEEVDN) are compositionally biased toward acidic residues.

Component of the DNA polymerase epsilon complex consisting of four subunits: the catalytic subunit POLE and the accessory subunits POLE2, POLE3 and POLE4. Interaction with POLE4 is a prerequisite for further binding with POLE and POLE2. Heterodimer with CHRAC1; binds to DNA. Component of the CHRAC ISWI chromatin remodeling complex at least composed of SMARCA5/SNF2H, BAZ1A/ACF1, CHRAC1 and POLE3; the complex preferentially binds DNA through the CHRAC1-POLE3 heterodimer and possesses ATP-dependent nucleosome-remodeling activity. Within the complex, the heterodimer with CHRAC1 interacts with SMARCA5/SNF2H; the interaction is direct and enhances nucleosome sliding activity by the SMARCA5/SNF2H and BAZ1A/ACF1 interaction. Within the complex, the heterodimer with CHRAC1 interacts with BAZ1A/ACF1; the interactions are direct.

It is found in the nucleus. Functionally, accessory component of the DNA polymerase epsilon complex. Participates in DNA repair and in chromosomal DNA replication. Forms a complex with CHRAC1 and binds naked DNA, which is then incorporated into chromatin, aided by the nucleosome-remodeling activity of ISWI/SNF2H and ACF1. Does not enhance nucleosome sliding activity of the ACF-5 ISWI chromatin remodeling complex. The chain is DNA polymerase epsilon subunit 3 (POLE3) from Bos taurus (Bovine).